Reading from the N-terminus, the 424-residue chain is Tol-Pal system protein TolB (424 aa).

The N-terminal stretch at 1–20 is a signal peptide; sequence MKQFIVFILSLYTTLSWAVL.

The protein belongs to the TolB family. In terms of assembly, the Tol-Pal system is composed of five core proteins: the inner membrane proteins TolA, TolQ and TolR, the periplasmic protein TolB and the outer membrane protein Pal. They form a network linking the inner and outer membranes and the peptidoglycan layer.

The protein resides in the periplasm. Functionally, part of the Tol-Pal system, which plays a role in outer membrane invagination during cell division and is important for maintaining outer membrane integrity. The sequence is that of Tol-Pal system protein TolB from Vesicomyosocius okutanii subsp. Calyptogena okutanii (strain HA).